The primary structure comprises 317 residues: tRNA dimethylallyltransferase (317 aa).

Position 14–21 (14–21) interacts with ATP; it reads GPTASGKT. Position 16-21 (16-21) interacts with substrate; the sequence is TASGKT. Interaction with substrate tRNA stretches follow at residues 39–42 and 163–167; these read DSAL and QRIQR.

It belongs to the IPP transferase family. In terms of assembly, monomer. Requires Mg(2+) as cofactor.

The catalysed reaction is adenosine(37) in tRNA + dimethylallyl diphosphate = N(6)-dimethylallyladenosine(37) in tRNA + diphosphate. In terms of biological role, catalyzes the transfer of a dimethylallyl group onto the adenine at position 37 in tRNAs that read codons beginning with uridine, leading to the formation of N6-(dimethylallyl)adenosine (i(6)A). The chain is tRNA dimethylallyltransferase from Stenotrophomonas maltophilia (strain R551-3).